Reading from the N-terminus, the 595-residue chain is MRAAPAAPLLQLLLLLGPRPEAAGVAEPPLPTVVLAILARNAEHSLPHYLGALERLDYPRARLALWCATDHNVDNTTAMLREWLAAVGDNYAAVVWRPEGEPRSYPDEEGPKHWTKERHQFLMELKQEALTFARDWGADYILFADTDNILTNNQTLRLLIEPGLPVVAPMLDSQTYYSNFWCGITPQGYYRRTADYFPTKNRQRRGCFRVPMVHSTFLVSLRAEGTGQLAFYPPHPNYTWPFDDIIVFAYACQAAGVAVHVCNEQRYGYLNVPVKSHQGLEDERVNFIHLILEALVDGPPMWASAHVSRPPKRPSKMGFDEVFVISLARRPDRRERMLTSLWEMEISGRVVDAVDGRMLNSSVMRTLGVDLLPGYQDPYSGRTLTKGEVGCFLSHYSIWEEVVTRGLAQVVVFEDDVRFESNFKGRLEQLMEEVEAEKLPWDLIYLGRKQVNPEEEAVVEGLPHLVAAGYSYWTLAYVLSLAGARKLLASQPLRRMLPVDEFLPIMFDQHPNEQYKAHFWPRDLQAFSARPLLAAPTHYAGDSEWLSDTETSSPWDDDSGRLISWTGSYKTLRGPRLDLAGGSGHSLRPHPRDEL.

The N-terminal stretch at 1–24 (MRAAPAAPLLQLLLLLGPRPEAAG) is a signal peptide. 4 N-linked (GlcNAc...) asparagine glycosylation sites follow: N75, N153, N237, and N360. The disordered stretch occupies residues 576 to 595 (RLDLAGGSGHSLRPHPRDEL). Positions 592 to 595 (RDEL) match the Prevents secretion from ER motif.

The protein belongs to the glycosyltransferase 25 family.

The protein resides in the endoplasmic reticulum lumen. Functionally, probable cell adhesion protein involved in leukocyte transmigration across the blood-brain barrier. Does not express any beta-galactosyltransferase activity in vitro. This Bos taurus (Bovine) protein is Probable inactive glycosyltransferase 25 family member 3 (CERCAM).